Here is a 434-residue protein sequence, read N- to C-terminus: Trigger factor (434 aa).

One can recognise a PPIase FKBP-type domain in the interval Glu-161–Pro-246.

This sequence belongs to the FKBP-type PPIase family. Tig subfamily.

The protein localises to the cytoplasm. It catalyses the reaction [protein]-peptidylproline (omega=180) = [protein]-peptidylproline (omega=0). Involved in protein export. Acts as a chaperone by maintaining the newly synthesized protein in an open conformation. Functions as a peptidyl-prolyl cis-trans isomerase. This is Trigger factor from Erwinia tasmaniensis (strain DSM 17950 / CFBP 7177 / CIP 109463 / NCPPB 4357 / Et1/99).